Consider the following 283-residue polypeptide: Glutamate racemase (283 aa).

Residues 13-14 (DS) and 45-46 (YG) each bind substrate. Cys-76 (proton donor/acceptor) is an active-site residue. Residue 77–78 (NT) participates in substrate binding. Residue Cys-186 is the Proton donor/acceptor of the active site. 187–188 (TH) contributes to the substrate binding site.

It belongs to the aspartate/glutamate racemases family.

The catalysed reaction is L-glutamate = D-glutamate. The protein operates within cell wall biogenesis; peptidoglycan biosynthesis. Its function is as follows. Provides the (R)-glutamate required for cell wall biosynthesis. The protein is Glutamate racemase of Microcystis aeruginosa (strain NIES-843 / IAM M-2473).